The primary structure comprises 355 residues: uncharacterized protein (355 aa).

The signal sequence occupies residues 1-22 (MRLTHVTACICLLVAVAVLFSG).

The protein belongs to the bacterial solute-binding protein 1 family. WtpA subfamily.

This is an uncharacterized protein from Methanoculleus marisnigri (strain ATCC 35101 / DSM 1498 / JR1).